Here is a 512-residue protein sequence, read N- to C-terminus: MQLNPSEISDLIKSRIQNLQLAATSRNEGTVVSVTDGITRIHGLTDVMQGEMLEFPGNTFGLALNLERDSVGAVVLGEYEHITEGDTVKATGRILEVPVGPELIGRVVNALGQPIDGKGPINAKLTDKIEKVAPGVIARQSVSQPVQTGLKSVDSMVPIGRGQRELIIGDRQTGKTAVAVDAIINQKGQNMFCVYVAIGQKASTIANVVRKLEENGAMEYTIVVAATASESAAMQYLSAYAGCTMGEYFRDRGQDALIVYDDLTKQAWAYRQVSLLLRRPPGREAYPGDVFYLHSRLLERAARVNADYVEKFTNGEVKGKTGSLTALPVIETQAGDVSAFVPTNVISITDGQIFLETDLFNAGIRPAINAGISVSRVGGAAQTKVVKKLSGGIRTDLAQYRELAAFAQFASDLDDATRKQLERGRRVTELMKQPQYAPLSVAEMAITLYAVNNGYFDDVEVARVLAFESGLQQFVKAKAPELVAKITDTKELDADGEKTLVAAIAEFKKSWA.

Residue 169–176 coordinates ATP; sequence GDRQTGKT.

It belongs to the ATPase alpha/beta chains family. F-type ATPases have 2 components, CF(1) - the catalytic core - and CF(0) - the membrane proton channel. CF(1) has five subunits: alpha(3), beta(3), gamma(1), delta(1), epsilon(1). CF(0) has three main subunits: a(1), b(2) and c(9-12). The alpha and beta chains form an alternating ring which encloses part of the gamma chain. CF(1) is attached to CF(0) by a central stalk formed by the gamma and epsilon chains, while a peripheral stalk is formed by the delta and b chains.

The protein localises to the cell inner membrane. The catalysed reaction is ATP + H2O + 4 H(+)(in) = ADP + phosphate + 5 H(+)(out). Produces ATP from ADP in the presence of a proton gradient across the membrane. The alpha chain is a regulatory subunit. This Azoarcus sp. (strain BH72) protein is ATP synthase subunit alpha.